Reading from the N-terminus, the 564-residue chain is Proline--tRNA ligase (564 aa).

Belongs to the class-II aminoacyl-tRNA synthetase family. ProS type 1 subfamily. Homodimer.

It is found in the cytoplasm. The enzyme catalyses tRNA(Pro) + L-proline + ATP = L-prolyl-tRNA(Pro) + AMP + diphosphate. Catalyzes the attachment of proline to tRNA(Pro) in a two-step reaction: proline is first activated by ATP to form Pro-AMP and then transferred to the acceptor end of tRNA(Pro). As ProRS can inadvertently accommodate and process non-cognate amino acids such as alanine and cysteine, to avoid such errors it has two additional distinct editing activities against alanine. One activity is designated as 'pretransfer' editing and involves the tRNA(Pro)-independent hydrolysis of activated Ala-AMP. The other activity is designated 'posttransfer' editing and involves deacylation of mischarged Ala-tRNA(Pro). The misacylated Cys-tRNA(Pro) is not edited by ProRS. The sequence is that of Proline--tRNA ligase from Xanthomonas oryzae pv. oryzae (strain KACC10331 / KXO85).